A 578-amino-acid polypeptide reads, in one-letter code: SWR1 complex bromodomain subunit bdf1 (578 aa).

The segment covering 1 to 18 (MSSESRENEVKAETKDEI) has biased composition (basic and acidic residues). Disordered regions lie at residues 1–89 (MSSE…PPPQ), 192–254 (DAEQ…RKNN), and 504–578 (ADSS…SESA). Positions 22–36 (GSPQLNGDNNIQSSD) are enriched in polar residues. Composition is skewed to basic and acidic residues over residues 37-52 (GHNDENEESLSRKRDS) and 60-77 (LKQEEKESMPKKEPEPTV). Residues 84-190 (GMPPPQQKYC…EVFERQLKQL (107 aa)) form the Bromo 1 domain. The segment covering 219–242 (NSSVSSTSASVAASTAPKAASPAV) has biased composition (low complexity). Phosphoserine is present on residues serine 221, serine 223, and serine 224. At threonine 225 the chain carries Phosphothreonine. 2 positions are modified to phosphoserine: serine 226 and serine 239. Residues 251 to 360 (RKNNSQMRFC…NVFKEKWEAR (110 aa)) form the Bromo 2 domain. Positions 430–510 (RRDLTKEYGP…KPDADSSEPA (81 aa)) constitute an NET domain. The residue at position 511 (serine 511) is a Phosphoserine. Over residues 526–537 (VLSETEQAEKIR) the composition is skewed to basic and acidic residues. A compositionally biased stretch (polar residues) spans 550–563 (TSPTSPESNNAANV). Acidic residues predominate over residues 566 to 578 (SESDNESESSESA).

It belongs to the BET family. As to quaternary structure, component of the SWR1 chromatin-remodeling complex.

It localises to the nucleus. In terms of biological role, component of the SWR1 complex which mediates the ATP-dependent exchange of histone H2A for the H2A variant HZT1 leading to transcriptional regulation of selected genes by chromatin remodeling. The polypeptide is SWR1 complex bromodomain subunit bdf1 (bdf1) (Schizosaccharomyces pombe (strain 972 / ATCC 24843) (Fission yeast)).